A 260-amino-acid polypeptide reads, in one-letter code: D-threitol dehydrogenase (260 aa).

An NAD(+)-binding site is contributed by L21–N50. The active-site Proton acceptor is the Y166. K170 is an NAD(+) binding site.

This sequence belongs to the short-chain dehydrogenases/reductases (SDR) family.

The catalysed reaction is D-threitol + NAD(+) = D-erythrulose + NADH + H(+). It participates in carbohydrate metabolism; D-threitol degradation. Its function is as follows. Catalyzes the NAD-dependent reversible oxidation of D-threitol. Involved in the degradation pathway of D-threitol, that allows M.smegmatis to grow on this compound as the sole carbon source. Does not catalyze the oxidation of xylitol, L-sorbitol, and L-sorbose. This chain is D-threitol dehydrogenase, found in Mycolicibacterium smegmatis (strain ATCC 700084 / mc(2)155) (Mycobacterium smegmatis).